We begin with the raw amino-acid sequence, 280 residues long: RNA polymerase II holoenzyme cyclin-like subunit (280 aa).

Residues 23-150 (ERRKGLEDIF…LIEELGTYLV (128 aa)) enclose the Cyclin N-terminal domain.

The protein belongs to the cyclin family. Cyclin C subfamily. As to quaternary structure, component of the SRB8-11 complex, a regulatory module of the Mediator complex.

It is found in the nucleus. Functionally, component of the SRB8-11 complex. The SRB8-11 complex is a regulatory module of the Mediator complex which is itself involved in regulation of basal and activated RNA polymerase II-dependent transcription. The SRB8-11 complex may be involved in the transcriptional repression of a subset of genes regulated by Mediator. It may inhibit the association of the Mediator complex with RNA polymerase II to form the holoenzyme complex. The SRB8-11 complex phosphorylates the C-terminal domain (CTD) of the largest subunit of RNA polymerase II. This chain is RNA polymerase II holoenzyme cyclin-like subunit (SSN8), found in Yarrowia lipolytica (strain CLIB 122 / E 150) (Yeast).